We begin with the raw amino-acid sequence, 251 residues long: Probable transcriptional regulatory protein SYO3AOP1_0685 (251 aa).

Belongs to the TACO1 family.

Its subcellular location is the cytoplasm. The sequence is that of Probable transcriptional regulatory protein SYO3AOP1_0685 from Sulfurihydrogenibium sp. (strain YO3AOP1).